Here is a 133-residue protein sequence, read N- to C-terminus: Ribonuclease P protein component (133 aa).

Belongs to the RnpA family. In terms of assembly, consists of a catalytic RNA component (M1 or rnpB) and a protein subunit.

It carries out the reaction Endonucleolytic cleavage of RNA, removing 5'-extranucleotides from tRNA precursor.. RNaseP catalyzes the removal of the 5'-leader sequence from pre-tRNA to produce the mature 5'-terminus. It can also cleave other RNA substrates such as 4.5S RNA. The protein component plays an auxiliary but essential role in vivo by binding to the 5'-leader sequence and broadening the substrate specificity of the ribozyme. In Pseudomonas fluorescens (strain Pf0-1), this protein is Ribonuclease P protein component.